Reading from the N-terminus, the 162-residue chain is Cyanate hydratase (162 aa).

Active-site residues include arginine 103, glutamate 106, and serine 129.

It belongs to the cyanase family.

It carries out the reaction cyanate + hydrogencarbonate + 3 H(+) = NH4(+) + 2 CO2. In terms of biological role, catalyzes the reaction of cyanate with bicarbonate to produce ammonia and carbon dioxide. The chain is Cyanate hydratase from Pyrenophora tritici-repentis (strain Pt-1C-BFP) (Wheat tan spot fungus).